Reading from the N-terminus, the 506-residue chain is MARLALLSVSNKTGLIDLARRLVEEFEFDLISSGGTAQALKDAGLPVTKVADYTGSPEILGGRVKTLHPRIHGGILARRDVASDLTDLENNQIRPIDLVVVNLYPFESTIAKPGVTLAEAVEQIDIGGPAMLRASSKNFAHLTVLCDPAQYDEYLQELRQNNGVASLEFRQKAALKGFLHTASYDSAIASYLSGTQQHTLSGTELQSLRYGENPHQPAAWYQTGTTPTGWTAAEKLQGKELSYNNLVDLEAARRIIAEFTDTPAATIIKHTNPCGTALADTIVEAYQKAFNADATSAFGGIVALNRPIDAATASELTKTFLECVIAPDCDAEAQKILSKKSNVRVLTLADLSTGPKTLVKQIAGGFLVQAADDIAADTSQWQVVTERQPTPDELAELLFAWKVCKHVKSNAIVVTSDRTTLGVGAGQMNRIGSTKIALEQAGDKAKGAILASDGFFPFDDTVRTAAAAGISAIVQPGGSLRDQDSVKAANELGLLMVLTGVRHFLH.

The MGS-like domain occupies 1–146 (MARLALLSVS…KNFAHLTVLC (146 aa)).

It belongs to the PurH family.

It carries out the reaction (6R)-10-formyltetrahydrofolate + 5-amino-1-(5-phospho-beta-D-ribosyl)imidazole-4-carboxamide = 5-formamido-1-(5-phospho-D-ribosyl)imidazole-4-carboxamide + (6S)-5,6,7,8-tetrahydrofolate. The enzyme catalyses IMP + H2O = 5-formamido-1-(5-phospho-D-ribosyl)imidazole-4-carboxamide. It functions in the pathway purine metabolism; IMP biosynthesis via de novo pathway; 5-formamido-1-(5-phospho-D-ribosyl)imidazole-4-carboxamide from 5-amino-1-(5-phospho-D-ribosyl)imidazole-4-carboxamide (10-formyl THF route): step 1/1. It participates in purine metabolism; IMP biosynthesis via de novo pathway; IMP from 5-formamido-1-(5-phospho-D-ribosyl)imidazole-4-carboxamide: step 1/1. The sequence is that of Bifunctional purine biosynthesis protein PurH from Nostoc sp. (strain PCC 7120 / SAG 25.82 / UTEX 2576).